A 146-amino-acid chain; its full sequence is Hemoglobin subunit beta (146 aa).

The 145-residue stretch at 2 to 146 (FLTAEEKGLV…VASALAHRYH (145 aa)) folds into the Globin domain. Residue S44 is modified to Phosphoserine. Residue K59 is modified to N6-acetyllysine. Residue H63 participates in heme b binding. K82 is modified (N6-acetyllysine). Heme b is bound at residue H92. Residue C93 is modified to S-nitrosocysteine.

It belongs to the globin family. Heterotetramer of two alpha chains and two beta chains. In terms of tissue distribution, red blood cells.

Functionally, involved in oxygen transport from the lung to the various peripheral tissues. The protein is Hemoglobin subunit beta (HBB) of Paguma larvata (Masked palm civet).